Reading from the N-terminus, the 136-residue chain is Large ribosomal subunit protein uL16 (136 aa).

Belongs to the universal ribosomal protein uL16 family. In terms of assembly, part of the 50S ribosomal subunit.

Binds 23S rRNA and is also seen to make contacts with the A and possibly P site tRNAs. This chain is Large ribosomal subunit protein uL16, found in Haemophilus ducreyi (strain 35000HP / ATCC 700724).